Here is a 241-residue protein sequence, read N- to C-terminus: Adenosylcobinamide-GDP ribazoletransferase (241 aa).

The next 7 membrane-spanning stretches (helical) occupy residues 34-54 (RIPA…FTGS), 55-75 (FLSL…GFYL), 109-129 (VGPF…ELIT), 133-153 (PVAF…VLVF), 165-185 (MLFP…LPLL), 186-206 (LIDV…GFLI), and 221-241 (VLGG…NYLI).

The protein belongs to the CobS family. Mg(2+) is required as a cofactor.

The protein resides in the cell inner membrane. The catalysed reaction is alpha-ribazole + adenosylcob(III)inamide-GDP = adenosylcob(III)alamin + GMP + H(+). It catalyses the reaction alpha-ribazole 5'-phosphate + adenosylcob(III)inamide-GDP = adenosylcob(III)alamin 5'-phosphate + GMP + H(+). It participates in cofactor biosynthesis; adenosylcobalamin biosynthesis; adenosylcobalamin from cob(II)yrinate a,c-diamide: step 7/7. Its function is as follows. Joins adenosylcobinamide-GDP and alpha-ribazole to generate adenosylcobalamin (Ado-cobalamin). Also synthesizes adenosylcobalamin 5'-phosphate from adenosylcobinamide-GDP and alpha-ribazole 5'-phosphate. This chain is Adenosylcobinamide-GDP ribazoletransferase, found in Fervidobacterium nodosum (strain ATCC 35602 / DSM 5306 / Rt17-B1).